Reading from the N-terminus, the 72-residue chain is UPF0154 protein lhv_1362 (72 aa).

A helical transmembrane segment spans residues 3 to 23 (LGLAIFLIIIALLVGAVAGFY).

The protein belongs to the UPF0154 family.

The protein resides in the cell membrane. The chain is UPF0154 protein lhv_1362 from Lactobacillus helveticus (strain DPC 4571).